A 484-amino-acid chain; its full sequence is ATP synthase subunit beta (484 aa).

162–169 (GGAGVGKT) serves as a coordination point for ATP.

The protein belongs to the ATPase alpha/beta chains family. As to quaternary structure, F-type ATPases have 2 components, CF(1) - the catalytic core - and CF(0) - the membrane proton channel. CF(1) has five subunits: alpha(3), beta(3), gamma(1), delta(1), epsilon(1). CF(0) has three main subunits: a(1), b(2) and c(9-12). The alpha and beta chains form an alternating ring which encloses part of the gamma chain. CF(1) is attached to CF(0) by a central stalk formed by the gamma and epsilon chains, while a peripheral stalk is formed by the delta and b chains.

It localises to the cell inner membrane. The enzyme catalyses ATP + H2O + 4 H(+)(in) = ADP + phosphate + 5 H(+)(out). Functionally, produces ATP from ADP in the presence of a proton gradient across the membrane. The catalytic sites are hosted primarily by the beta subunits. The sequence is that of ATP synthase subunit beta from Agrobacterium fabrum (strain C58 / ATCC 33970) (Agrobacterium tumefaciens (strain C58)).